Here is a 252-residue protein sequence, read N- to C-terminus: Transmembrane ascorbate-dependent reductase CYB561 (252 aa).

An N-acetylmethionine modification is found at Met1. Residues 1 to 17 (MEGPASPARAPGALPYY) lie on the Cytoplasmic side of the membrane. A helical membrane pass occupies residues 18-38 (VAFSQLLGLIVVAMTGAWLGM). The Cytochrome b561 domain maps to 20-221 (FSQLLGLIVV…FATVILYILT (202 aa)). Residues 39–52 (YRGGIAWESALQFN) are Vesicular-facing. A helical membrane pass occupies residues 53–73 (VHPLCMIIGLVFLQGDALLVY). Heme b-binding residues include His54, Arg74, and Lys81. The Cytoplasmic portion of the chain corresponds to 74 to 86 (RVFRNEAKRTTKV). L-ascorbate contacts are provided by Lys81 and Lys85. The chain crosses the membrane as a helical span at residues 87-107 (LHGLLHVFAFVIALVGLVAVF). Heme b-binding positions include His88, 117 to 120 (DLYS), and His122. Topologically, residues 108–125 (EHHRKKGYADLYSLHSWC) are vesicular. A helical transmembrane segment spans residues 126–146 (GILVFALFFAQWLVGFSFFLF). At 147–159 (PGASFSLRSRYRP) the chain is on the cytoplasmic side. Residue Arg154 coordinates L-ascorbate. Residues 160–180 (QHVFFGAAIFLLSVATALLGL) traverse the membrane as a helical segment. Heme b is bound by residues His161 and Glu182. Residues 181 to 199 (KEALLFELGTKYSMFEPEG) are Vesicular-facing. A helical transmembrane segment spans residues 200-220 (VLANVLGLLLATFATVILYIL). Residues 221-252 (TRADWKRPLQAEEQALSMDFKTLTEGDSPSSQ) lie on the Cytoplasmic side of the membrane. Residue Lys226 participates in heme b binding. A phosphoserine mark is found at Ser248 and Ser250.

Heme b serves as cofactor. In terms of tissue distribution, expressed in the adrenal medulla and all brain regions, but not in visceral organs.

It localises to the cytoplasmic vesicle. The protein localises to the secretory vesicle. Its subcellular location is the chromaffin granule membrane. The catalysed reaction is monodehydro-L-ascorbate radical(out) + L-ascorbate(in) = monodehydro-L-ascorbate radical(in) + L-ascorbate(out). Transmembrane reductase that uses ascorbate as an electron donor in the cytoplasm and transfers electrons across membranes to reduce monodehydro-L-ascorbate radical in the lumen of secretory vesicles. It is therefore involved the regeneration and homeostasis within secretory vesicles of ascorbate which in turn provides reducing equivalents needed to support the activity of intravesicular enzymes. The protein is Transmembrane ascorbate-dependent reductase CYB561 (CYB561) of Bos taurus (Bovine).